Here is a 109-residue protein sequence, read N- to C-terminus: MSFFLNSLRGNQEVSQEKLDVAGVQFDAMCSTFNNILSTCLEKCIPHEGFGEPDLTKGEQCCIDRCVAKMHYSNRLIGGFVQTRGFGPENQLRHYSRFVAKEIADDSKK.

The residue at position 2 (S2) is an N-acetylserine. Residues C40 to C66 carry the Twin CX3C motif motif. 2 disulfide bridges follow: C40/C66 and C44/C62.

Belongs to the small Tim family. In terms of assembly, component of the TIM22 complex, whose core is composed of TIM18, TIM22 and TIM54, associated with the peripheral proteins MRS5/TIM12 and the 70 kDa heterohexamer composed of TIM9 and TIM10 (or TIM8 and TIM13). Interacts directly with both the TIM22 protein and the TIM9-TIM10 heterohexamer. Interacts with multi-pass transmembrane proteins in transit.

The protein resides in the mitochondrion inner membrane. Its subcellular location is the mitochondrion intermembrane space. Its function is as follows. Essential component of the TIM22 complex, a complex that mediates the import and insertion of multi-pass transmembrane proteins into the mitochondrial inner membrane. The TIM22 complex forms a twin-pore translocase that uses the membrane potential as external driving force. In the TIM22 complex, it acts as a docking point for the soluble TIM9-TIM10 heterohexamer that guides the target proteins in transit through the aqueous mitochondrial intermembrane space. This chain is Mitochondrial import inner membrane translocase subunit TIM12 (TIM12), found in Saccharomyces cerevisiae (strain ATCC 204508 / S288c) (Baker's yeast).